We begin with the raw amino-acid sequence, 345 residues long: uncharacterized protein (345 aa).

The next 8 membrane-spanning stretches (helical) occupy residues 9 to 31 (VVAF…AAFV), 84 to 103 (TLVA…TYLL), 116 to 138 (YFSL…ILYT), 148 to 170 (VPMQ…SGIF), 182 to 204 (VVFV…TIHA), 269 to 286 (WFFW…GVLG), 291 to 308 (ISHY…IAGY), and 313 to 335 (HGLT…VFFI).

It localises to the cell membrane. This is an uncharacterized protein from Treponema pallidum (strain Nichols).